Reading from the N-terminus, the 143-residue chain is Ribosomal RNA large subunit methyltransferase H (143 aa).

S-adenosyl-L-methionine contacts are provided by residues glycine 95 and 111–116 (FSDLTF).

This sequence belongs to the RNA methyltransferase RlmH family. In terms of assembly, homodimer.

The protein localises to the cytoplasm. The catalysed reaction is pseudouridine(1915) in 23S rRNA + S-adenosyl-L-methionine = N(3)-methylpseudouridine(1915) in 23S rRNA + S-adenosyl-L-homocysteine + H(+). Functionally, specifically methylates the pseudouridine at position 1915 (m3Psi1915) in 23S rRNA. This chain is Ribosomal RNA large subunit methyltransferase H, found in Metamycoplasma arthritidis (strain 158L3-1) (Mycoplasma arthritidis).